The following is a 504-amino-acid chain: GTPase Der (504 aa).

Positions 4–168 (PVVALVGRPN…QVLAPFAEKM (165 aa)) constitute an EngA-type G 1 domain. GTP contacts are provided by residues 10–17 (GRPNVGKS), 57–61 (DTGGI), and 120–123 (NKTD). Residues 168 to 179 (MENADENDRTSE) show a composition bias toward basic and acidic residues. The interval 168-191 (MENADENDRTSEEEQDEWEQEFDF) is disordered. Residues 180-191 (EEQDEWEQEFDF) show a composition bias toward acidic residues. Residues 216 to 389 (IKIAIVGRPN…SIKEAYACAT (174 aa)) form the EngA-type G 2 domain. GTP contacts are provided by residues 222–229 (GRPNVGKS), 269–273 (DTAGV), and 334–337 (NKWD). Residues 390-474 (QKMTTSLLTR…PIRLLFQEGS (85 aa)) enclose the KH-like domain.

This sequence belongs to the TRAFAC class TrmE-Era-EngA-EngB-Septin-like GTPase superfamily. EngA (Der) GTPase family. Associates with the 50S ribosomal subunit.

GTPase that plays an essential role in the late steps of ribosome biogenesis. In Haemophilus influenzae (strain ATCC 51907 / DSM 11121 / KW20 / Rd), this protein is GTPase Der.